The primary structure comprises 494 residues: Sugar phosphate exchanger 3 (494 aa).

The helical transmembrane segment at 16 to 36 (FSHHHVVVFLLTFFSYSLLHA) threads the bilayer. Asparagine 58 is a glycosylation site (N-linked (GlcNAc...) asparagine). Helical transmembrane passes span 81–101 (TLFL…GLFI), 113–133 (WVLS…GALT), 147–167 (LWIV…AVMG), 177–197 (VVFG…ACLA), and 209–229 (FLVT…GLLV). N-linked (GlcNAc...) asparagine glycosylation is present at asparagine 266. Transmembrane regions (helical) follow at residues 297–317 (LAYA…PFYL), 333–353 (IWYD…SDVL), 357–377 (APVL…YSRS), 386–406 (LLMT…SSAI), 428–448 (GIVD…VSLI), and 452–472 (LGWM…IVFI).

Belongs to the major facilitator superfamily. Organophosphate:Pi antiporter (OPA) (TC 2.A.1.4) family. Interacts with ATRAID; the interaction is direct and both proteins are mutually dependent for their stability. In terms of processing, glycosylated. Expressed in liver, kidney, intestine and pancreas.

It is found in the endoplasmic reticulum membrane. The protein resides in the lysosome membrane. Its function is as follows. Unlike the other SLC37 members, lacks glucose-6-phosphate antiporter activity. In osteoclasts, forms a transporter complex with ATRAID for nitrogen-containing-bisphophonates (N-BPs) required for releasing N-BP molecules that have trafficked to lysosomes through fluid-phase endocytosis into the cytosol. This chain is Sugar phosphate exchanger 3, found in Homo sapiens (Human).